The following is a 504-amino-acid chain: Putative ribose/galactose/methyl galactoside import ATP-binding protein (504 aa).

ABC transporter domains follow at residues 5–242 (ISVK…GRNL) and 252–497 (TSAN…TRRE). Residue 37 to 44 (GENGAGKS) coordinates ATP.

The protein belongs to the ABC transporter superfamily. Carbohydrate importer 2 (CUT2) (TC 3.A.1.2) family.

It localises to the cell inner membrane. It catalyses the reaction D-ribose(out) + ATP + H2O = D-ribose(in) + ADP + phosphate + H(+). The enzyme catalyses D-galactose(out) + ATP + H2O = D-galactose(in) + ADP + phosphate + H(+). Its function is as follows. Part of an ABC transporter complex involved in carbohydrate import. Could be involved in ribose, galactose and/or methyl galactoside import. Responsible for energy coupling to the transport system. The chain is Putative ribose/galactose/methyl galactoside import ATP-binding protein from Albidiferax ferrireducens (strain ATCC BAA-621 / DSM 15236 / T118) (Rhodoferax ferrireducens).